We begin with the raw amino-acid sequence, 163 residues long: Nucleotide-binding protein CYA_0935 (163 aa).

This sequence belongs to the YajQ family.

Nucleotide-binding protein. This is Nucleotide-binding protein CYA_0935 from Synechococcus sp. (strain JA-3-3Ab) (Cyanobacteria bacterium Yellowstone A-Prime).